The following is a 294-amino-acid chain: Ribosomal protein L11 methyltransferase (294 aa).

Thr-145, Gly-167, Asp-189, and Asn-230 together coordinate S-adenosyl-L-methionine.

The protein belongs to the methyltransferase superfamily. PrmA family.

Its subcellular location is the cytoplasm. It catalyses the reaction L-lysyl-[protein] + 3 S-adenosyl-L-methionine = N(6),N(6),N(6)-trimethyl-L-lysyl-[protein] + 3 S-adenosyl-L-homocysteine + 3 H(+). Its function is as follows. Methylates ribosomal protein L11. This chain is Ribosomal protein L11 methyltransferase, found in Alkalilimnicola ehrlichii (strain ATCC BAA-1101 / DSM 17681 / MLHE-1).